We begin with the raw amino-acid sequence, 433 residues long: MSAKKLFIQTLGCAMNVRDSEHMIAELTQKENYALTEDIKEADLILINTCSVREKPVHKLFSEVGGFEKVKKEGAKIGVCGCTASHLGNEIFKRAPYVDFVLGARNISKITQAIKTPKFMGVDIDYDESEFAFADFRNSIYKSYINISIGCDKHCTYCIVPHTRGDEISIPFNIIYKEAQKAVEKGAKEIFLLGQNVNNYGKRFRNEHKKMDFSDLLEELSTIEDLERIRFTSPHPLHMDDKFLEVFANNPKVCKSMHMPLQSGSSEILKAMKRGYTKEWYLNRALKLRELCPNVSISTDIIVAFPGESEKDFEETMDVLEKVRFEQIFSFKYSKRPLTKAATMPNQIDEETASRRLSTLQNRHSEILDEIVKKQENKTFKVLFEELRAGNSIAGRTDNNFLVQVEGSEELLGQFKEVKITNAKRMVLYGEIV.

The MTTase N-terminal domain occupies 4-119 (KKLFIQTLGC…ITQAIKTPKF (116 aa)). Residues C13, C50, C82, C151, C155, and C158 each coordinate [4Fe-4S] cluster. Positions 137-370 (RNSIYKSYIN…QNRHSEILDE (234 aa)) constitute a Radical SAM core domain. The TRAM domain maps to 373–433 (KKQENKTFKV…KRMVLYGEIV (61 aa)).

This sequence belongs to the methylthiotransferase family. MiaB subfamily. In terms of assembly, monomer. [4Fe-4S] cluster is required as a cofactor.

The protein resides in the cytoplasm. It catalyses the reaction N(6)-dimethylallyladenosine(37) in tRNA + (sulfur carrier)-SH + AH2 + 2 S-adenosyl-L-methionine = 2-methylsulfanyl-N(6)-dimethylallyladenosine(37) in tRNA + (sulfur carrier)-H + 5'-deoxyadenosine + L-methionine + A + S-adenosyl-L-homocysteine + 2 H(+). Functionally, catalyzes the methylthiolation of N6-(dimethylallyl)adenosine (i(6)A), leading to the formation of 2-methylthio-N6-(dimethylallyl)adenosine (ms(2)i(6)A) at position 37 in tRNAs that read codons beginning with uridine. This Campylobacter jejuni (strain RM1221) protein is tRNA-2-methylthio-N(6)-dimethylallyladenosine synthase.